Reading from the N-terminus, the 500-residue chain is NAD(P)H-quinone oxidoreductase chain 4, chloroplastic (500 aa).

14 consecutive transmembrane segments (helical) span residues 4–24 (FPWL…IFFL), 37–57 (ISIC…HFQL), 87–107 (VGSI…AWPV), 113–130 (LFYF…GLFS), 134–154 (LLLF…LLSM), 167–187 (FILY…GMGL), 211–231 (ILLY…IPLH), 242–262 (HYST…YGLI), 272–292 (AHYL…IYAA), 313–333 (MGFI…GAIL), 334–354 (QILS…TASD), 386–406 (LALP…GLIT), 417–437 (LITF…LSML), and 462–482 (LFIL…PDLV).

This sequence belongs to the complex I subunit 4 family.

The protein resides in the plastid. It is found in the chloroplast thylakoid membrane. The enzyme catalyses a plastoquinone + NADH + (n+1) H(+)(in) = a plastoquinol + NAD(+) + n H(+)(out). It catalyses the reaction a plastoquinone + NADPH + (n+1) H(+)(in) = a plastoquinol + NADP(+) + n H(+)(out). In Agrostis stolonifera (Creeping bentgrass), this protein is NAD(P)H-quinone oxidoreductase chain 4, chloroplastic.